Here is an 883-residue protein sequence, read N- to C-terminus: Glutamate receptor 2 (883 aa).

An N-terminal signal peptide occupies residues methionine 1–serine 24. Residues asparagine 25–alanine 543 are Extracellular-facing. An intrachain disulfide couples cysteine 78 to cysteine 330. N-linked (GlcNAc...) asparagine glycosylation is found at asparagine 256, asparagine 370, asparagine 406, and asparagine 413. 3 residues coordinate L-glutamate: proline 499, threonine 501, and arginine 506. A helical transmembrane segment spans residues tyrosine 544–valine 564. At serine 565–glutamate 591 the chain is on the cytoplasmic side. An intramembrane region (helical; Pore-forming) is located at residues phenylalanine 592 to arginine 607. Residues glutamine 608–cysteine 610 lie within the membrane without spanning it. The S-palmitoyl cysteine moiety is linked to residue cysteine 610. Residues aspartate 611–serine 616 lie on the Cytoplasmic side of the membrane. A helical membrane pass occupies residues leucine 617–tyrosine 637. The Extracellular segment spans residues threonine 638 to asparagine 812. Residues serine 675 and threonine 676 each coordinate L-glutamate. Serine 683 carries the phosphoserine; by PKC modification. Serine 717 is subject to Phosphoserine; by PKG. Glutamate 726 is a binding site for L-glutamate. Cysteine 739 and cysteine 794 are disulfide-bonded. The chain crosses the membrane as a helical span at residues valine 813–isoleucine 833. At glutamate 834–isoleucine 883 the chain is on the cytoplasmic side. A lipid anchor (S-palmitoyl cysteine) is attached at cysteine 836. Phosphoserine occurs at positions 860 and 863. The segment at alanine 867–glycine 877 is required for interaction with IQSEC1. Residue tyrosine 876 is modified to Phosphotyrosine. The residue at position 880 (serine 880) is a Phosphoserine.

Belongs to the glutamate-gated ion channel (TC 1.A.10.1) family. GRIA2 subfamily. As to quaternary structure, homotetramer or heterotetramer of pore-forming glutamate receptor subunits. Tetramers may be formed by the dimerization of dimers. May interact with MPP4. Forms a ternary complex with GRIP1 and CSPG4. Interacts with ATAD1 in an ATP-dependent manner. ATAD1-catalyzed ATP hydrolysis disrupts binding to ATAD1 and to GRIP1 and leads to AMPAR complex disassembly. Interacts with GRIP1 and GRIP2. Interacts with NSF via its C-terminus. Isoform 1, but not isoform 3, interacts with PICK1. Interacts with CACNG2. Interacts with GRIA1 and SYNDIG1. Part of a complex containing GRIA2, NSF and NAPA and/or NAPB. Interacts with SNX27 (via PDZ domain); the interaction is required for recycling to the plasma membrane when endocytosed and prevent degradation in lysosomes. Interacts with LRFN1. Found in a complex with GRIA1, GRIA3, GRIA4, CNIH2, CNIH3, CACNG2, CACNG3, CACNG4, CACNG5, CACNG7 and CACNG8. Interacts with CACNG5. Interacts with OLFM2. Interacts with AP4B1, AP4E1 and AP4M1; probably indirect it mediates the somatodendritic localization of GRIA2 in neurons. Forms a complex with GRIP1, NSG1 and STX12; controls the intracellular fate of AMPAR and the endosomal sorting of the GRIA2 subunit toward recycling and membrane targeting. Interacts with IQSEC1; the interaction is required for ARF6 activation. Interacts (heterotetramer form) with CNIH2 and CNIH3; this interaction promotes expression at the plasma membrane and extensively modulates their gating properties by slowing deactivation and desensitization kinetics. Phosphorylation at Tyr-876 is required for interaction with IQSEC1 and ARF6 activation, which in turn triggers AMPAR internalization for persistent synaptic depression. Post-translationally, palmitoylated. Depalmitoylated upon L-glutamate stimulation. ZDHHC3/GODZ specifically palmitoylates Cys-610, which leads to Golgi retention and decreased cell surface expression. In contrast, Cys-836 palmitoylation does not affect cell surface expression but regulates stimulation-dependent endocytosis. In terms of processing, N-glycosylated. Ubiquitinated by RNF167, leading to its degradation.

It is found in the cell membrane. The protein localises to the postsynaptic cell membrane. It localises to the postsynaptic density membrane. The catalysed reaction is Ca(2+)(in) = Ca(2+)(out). It catalyses the reaction Na(+)(in) = Na(+)(out). In terms of biological role, ionotropic glutamate receptor that functions as a ligand-gated cation channel, gated by L-glutamate and glutamatergic agonists such as alpha-amino-3-hydroxy-5-methyl-4-isoxazolepropionic acid (AMPA), quisqualic acid, and kainic acid. L-glutamate acts as an excitatory neurotransmitter at many synapses in the central nervous system and plays an important role in fast excitatory synaptic transmission. Binding of the excitatory neurotransmitter L-glutamate induces a conformation change, leading to the opening of the cation channel, and thereby converts the chemical signal to an electrical impulse upon entry of monovalent and divalent cations such as sodium and calcium. The receptor then desensitizes rapidly and enters in a transient inactive state, characterized by the presence of bound agonist. In the presence of CACNG4 or CACNG7 or CACNG8, shows resensitization which is characterized by a delayed accumulation of current flux upon continued application of L-glutamate. Through complex formation with NSG1, GRIP1 and STX12 controls the intracellular fate of AMPAR and the endosomal sorting of the GRIA2 subunit toward recycling and membrane targeting. In Macaca fascicularis (Crab-eating macaque), this protein is Glutamate receptor 2.